The following is an 878-amino-acid chain: Protein daughter of sevenless (878 aa).

The PH domain maps to 3 to 113; that stretch reads RTFYEGWLIK…WVNCICQVCH (111 aa). The interval 132–176 is disordered; the sequence is ENRTQHTSSSGGLSNSTQNTTTTSLHSSAGTTAPQASVPNAGGSA. The segment covering 136–159 has biased composition (low complexity); the sequence is QHTSSSGGLSNSTQNTTTTSLHSS. Residues 160-169 are compositionally biased toward polar residues; the sequence is AGTTAPQASV. The stretch at 246 to 275 forms a coiled coil; the sequence is ALIQAQAAAAAAEQLQQQQQQAARLAVSAN. The tract at residues 391–437 is disordered; it reads NNNASKQRSDSDSESVFTDDDEWAHPLPLRENVDRSTRPSDSSIENE. Residue serine 399 is modified to Phosphoserine. Threonine 481 is subject to Phosphothreonine. Interaction with DRK stretches follow at residues 638-650 and 690-702; these read DCPPVNRKLKPKV and GPPSVDRKCKPNA. Disordered regions lie at residues 686-721 and 749-773; these read QQPIGPPSVDRKCKPNAYKLGNSATMSPATRRSSGA and LPRQQHRHHPNSPGSMSVQHQRTAS. Composition is skewed to polar residues over residues 707-718 and 760-770; these read NSATMSPATRRS and SPGSMSVQHQR. Residue threonine 771 is modified to Phosphothreonine. 2 positions are modified to phosphotyrosine: tyrosine 801 and tyrosine 854.

Interacts with DRK. In terms of processing, phosphorylated on Tyr-801 and Tyr-854 in response to sevenless activation, which initiates the recruitment of the phosphatase CSW.

The protein resides in the cytoplasm. Its subcellular location is the membrane. In terms of biological role, essential component for signaling from various receptor tyrosine kinases such as Sevenless, TORSO and DER. Required for photoreceptor cell and wing development. In Drosophila melanogaster (Fruit fly), this protein is Protein daughter of sevenless (dos).